The chain runs to 130 residues: Large ribosomal subunit protein bL21 (130 aa).

The segment at 110 to 130 is disordered; it reads TAPTATEETADATPDTETAAE.

Belongs to the bacterial ribosomal protein bL21 family. Part of the 50S ribosomal subunit. Contacts protein L20.

Functionally, this protein binds to 23S rRNA in the presence of protein L20. The chain is Large ribosomal subunit protein bL21 from Nostoc sp. (strain PCC 7120 / SAG 25.82 / UTEX 2576).